The following is a 13041-amino-acid chain: Nonribosomal peptide synthetase kk1B (13041 aa).

The adenylation 1 stretch occupies residues 267–663 (ANRVVDTPQK…GRRDSQIKIR (397 aa)). The Carrier 1 domain occupies 788–864 (ASLMTEGITL…GLINVMQQSS (77 aa)). At Ser825 the chain carries O-(pantetheine 4'-phosphoryl)serine. A condensation 1 region spans residues 882–1313 (SFAQGRLWFL…TPIAHLQLTD (432 aa)). Residues 1341-1736 (FQKQVAACPN…GRMDFQIKIR (396 aa)) form an adenylation 2 region. The region spanning 1865-1939 (AARNEIEAVL…NLAATIKRGS (75 aa)) is the Carrier 2 domain. At Ser1899 the chain carries O-(pantetheine 4'-phosphoryl)serine. The tract at residues 1957–2383 (SFAQGRLWFL…DQPQTPLALL (427 aa)) is condensation 2. An adenylation 3 region spans residues 2418 to 2812 (QVAASPNATA…GRMDQQIKIR (395 aa)). The tract at residues 2891-3023 (VGNDFMGWTS…EYLSKVLYAL (133 aa)) is methyltransferase (M) domain 1. A Carrier 3 domain is found at 3353–3427 (GARNETEAVL…DLAASIRRGS (75 aa)). An O-(pantetheine 4'-phosphoryl)serine modification is found at Ser3387. The interval 3445–3869 (SFAQGRLWFL…DQPQIPIAVL (425 aa)) is condensation 3. Residues 3901–4300 (FRAQVVACPD…GRMDQQVKIR (400 aa)) are adenylation 4. In terms of domain architecture, Carrier 4 spans 4412–4486 (PPRNEIETIL…NLAAAVQRGS (75 aa)). An O-(pantetheine 4'-phosphoryl)serine modification is found at Ser4446. Residues 4504–4935 (SFAQGRLWFL…TPIAALSLTD (432 aa)) form a condensation 4 region. Positions 4963 to 5362 (FREQVATYPD…GRMDRQLKIR (400 aa)) are adenylation 5. Residues 5430–5567 (TYAELDTLVK…VAQYFPTPEY (138 aa)) are methyltransferase (M) domain 2. Residues 5897–5971 (QPRNEVEAVL…DLAAAIQRGS (75 aa)) form the Carrier 5 domain. Residue Ser5931 is modified to O-(pantetheine 4'-phosphoryl)serine. Residues 5989–6416 (SYAQGRLWFL…DQPQTPLALL (428 aa)) form a condensation 5 region. The tract at residues 6451 to 6845 (QVAASPNATA…GRMDQQIKIR (395 aa)) is adenylation 6. The tract at residues 6924 to 7056 (VGNDFMGWTS…EYLSKVLYAL (133 aa)) is methyltransferase (M) domain 3. Residues 7386–7460 (GARNEIEAAL…DLAGAVQRGS (75 aa)) form the Carrier 6 domain. Ser7420 bears the O-(pantetheine 4'-phosphoryl)serine mark. A condensation 6 region spans residues 7478–7901 (SFAQGRLWFL…GLETPRLPIS (424 aa)). The tract at residues 7934 to 8335 (FRTQVAASPD…GRMDRQLKIR (402 aa)) is adenylation 7. Residues 8404–8540 (YAEIEEIDSS…AQYFPSPEYL (137 aa)) form a methyltransferase (M) domain 4 region. One can recognise a Carrier 7 domain in the interval 8871–8945 (GPRNEIEALL…DLAASIQRGS (75 aa)). An O-(pantetheine 4'-phosphoryl)serine modification is found at Ser8905. The condensation 7 stretch occupies residues 8963 to 9392 (SFAQGRLWFL…PKTPIAVLPL (430 aa)). Positions 9422–9822 (FRQQVAARPD…SRMDQQVKIR (401 aa)) are adenylation 8. Residues 9943-10017 (PPTNDMERIL…DLASTIKQDS (75 aa)) enclose the Carrier 8 domain. Ser9977 is modified (O-(pantetheine 4'-phosphoryl)serine). The interval 10035–10462 (SFAQGRLWFL…ETPQTPLAVL (428 aa)) is condensation 8. The tract at residues 10494 to 10892 (FRAQVAACPD…GRMDQQIKIR (399 aa)) is adenylation 9. Residues 10959-11105 (IYAEIEEIDS…EYLADVVGAL (147 aa)) form a methyltransferase (M) domain 5 region. One can recognise a Carrier 9 domain in the interval 11428 to 11502 (SARNEVEAVL…DLAASIERNS (75 aa)). Residue Ser11462 is modified to O-(pantetheine 4'-phosphoryl)serine. The segment at 11520–11945 (SFAQGRLWFL…EQPQTPIAVL (426 aa)) is condensation 9. Residues 11977 to 12377 (FRDQVAANPR…GRMDQQIKIR (401 aa)) form an adenylation 10 region. Residues 12495–12569 (VPRNELEASL…DLALKVSSYI (75 aa)) enclose the Carrier 10 domain. Ser12529 carries the post-translational modification O-(pantetheine 4'-phosphoryl)serine. Positions 12647 to 13032 (FPANADCDKI…RMHEEFCDII (386 aa)) are condensation 10.

This sequence belongs to the NRP synthetase family.

It functions in the pathway secondary metabolite biosynthesis. In terms of biological role, nonribosomal peptide synthetase; part of the gene cluster that mediates the biosynthesis of KK-1, a novel cyclic depsipeptide with 10 residues which is a promising active compound with high activity against many plant pathogens, especially Botrytis cinerea. The nonribosomal peptide synthetase (NRPS) kk1B catalyzes the elongation and cyclization of the decapeptide chain composed of 1 D-lactic acid residue (D-Lac), 1 pipecolic acid residue (Pip), 1 aspartic acid residue (Asp), 1 isoleucine residue (Ile), 1 glycine residue (Gly), 1 tyrosine residue (Tyr) and 4 valine residues (Val). The Asp, Ile and 3 Val residues are N-methylated by the 5 methyltransferase domains from the NRPS (found in modules 3, 5, 6, 7 and 9), whereas the Tyr residue is O-methylated by the cluster encoded O-methyltransferase kk1A. Cyclization with the hydroxy group of the D-lactic acid as a nucleophile is presumed to occur in the final module of NRPS, resulting in the formation of the depsipeptide ester bond through macrocyclization by the C-terminal C domain. The thioesterase kk1J is likely to be involved in the corrective mechanism of peptide chain synthesis. The D-lactate dehydrogenase kk1H is involved in the synthesis of D-lactic acid from pyruvic acid, which is recognized by the A domain of the first kk1B module. The pyrroline-5-carboxylate reductase kk1I is involved in the synthesis of the L-pipecolic acid residue of KK-1 from delta-1-pyrroline-5-carboxylate (P5C), a metabolic intermediate of lysine. It is still unclear how kk1C and kk1D are involved in the production of KK-1. The chain is Nonribosomal peptide synthetase kk1B from Curvularia clavata.